We begin with the raw amino-acid sequence, 812 residues long: Leucine--tRNA ligase (812 aa).

Residues 40-51 (SYPSGSNLHAGH) carry the 'HIGH' region motif. The 'KMSKS' region motif lies at 572 to 576 (KMSKS). Lys575 lines the ATP pocket.

Belongs to the class-I aminoacyl-tRNA synthetase family.

The protein resides in the cytoplasm. It catalyses the reaction tRNA(Leu) + L-leucine + ATP = L-leucyl-tRNA(Leu) + AMP + diphosphate. This is Leucine--tRNA ligase from Clostridium tetani (strain Massachusetts / E88).